The primary structure comprises 317 residues: tRNA dimethylallyltransferase (317 aa).

Residue 19–26 (GPTASGKS) coordinates ATP. Residue 21–26 (TASGKS) participates in substrate binding. Residues 44–47 (DSMQ) are interaction with substrate tRNA.

Belongs to the IPP transferase family. As to quaternary structure, monomer. It depends on Mg(2+) as a cofactor.

It carries out the reaction adenosine(37) in tRNA + dimethylallyl diphosphate = N(6)-dimethylallyladenosine(37) in tRNA + diphosphate. Functionally, catalyzes the transfer of a dimethylallyl group onto the adenine at position 37 in tRNAs that read codons beginning with uridine, leading to the formation of N6-(dimethylallyl)adenosine (i(6)A). This Methylorubrum extorquens (strain PA1) (Methylobacterium extorquens) protein is tRNA dimethylallyltransferase.